A 597-amino-acid polypeptide reads, in one-letter code: MKNIRNFSIIAHIDHGKSTLADRIIQLCGGLSDREMEAQVLDSMDIERERGITIKAQTAALEYKALDGQVYNLNLIDTPGHVDFSYEVSRSLAACEGALLVVDASQGVEAQSVANCYTAIDQGVEVVPVLNKIDLPAADPERVMQEIEDVIGVDASEAVRCSAKTGVGVQDVLETMIAKIPPPVGDPEKPLKALIIDSWFDNYVGVIMLVRVVDGVLKPKDKIRMMATKATYLCEQVGVFTPKSRPRASLSAGEVGFIIAGIKELTSAKVGDTVTLADRPASEALPGFKEVKPQVFAGLYPVESNQFEALREALEKLRLNDASLQFEPENSSALGFGFRCGFLGLLHMEIVQERLEREYDMDLITTAPTVVYELLLKSGEVVQIENPSRLPEPSRITEIREPIITINLLMPQDYVGPVMTLCNNKRGVQRNMQYMGRQVMLSYEMPLNEVVLDFFDRLKSVSRGYASMDYEFLEFRAADLVKLDIMVNGERVDALSLIVHRSNSVYRGRELVSKMRELIPRQMFDIAVQASIGANIIARETVKAMRKNVLAKCYGGDITRKKKLLEKQKEGKKRMKQVGNVEIPQEAFLAILRVEDK.

The tr-type G domain occupies 2–184 (KNIRNFSIIA…TMIAKIPPPV (183 aa)). Residues 14 to 19 (DHGKST) and 131 to 134 (NKID) contribute to the GTP site.

This sequence belongs to the TRAFAC class translation factor GTPase superfamily. Classic translation factor GTPase family. LepA subfamily.

The protein resides in the cell inner membrane. It carries out the reaction GTP + H2O = GDP + phosphate + H(+). Functionally, required for accurate and efficient protein synthesis under certain stress conditions. May act as a fidelity factor of the translation reaction, by catalyzing a one-codon backward translocation of tRNAs on improperly translocated ribosomes. Back-translocation proceeds from a post-translocation (POST) complex to a pre-translocation (PRE) complex, thus giving elongation factor G a second chance to translocate the tRNAs correctly. Binds to ribosomes in a GTP-dependent manner. This Methylobacillus flagellatus (strain ATCC 51484 / DSM 6875 / VKM B-1610 / KT) protein is Elongation factor 4.